Here is a 1202-residue protein sequence, read N- to C-terminus: Calmodulin-binding transcription activator 2 (1202 aa).

Positions 30–155 (RCPLLPPERL…YLNVPALEDC (126 aa)) form a DNA-binding region, CG-1. Residues 79-86 (RKKVKYRK) carry the Nuclear localization signal motif. Disordered regions lie at residues 263-322 (SIPH…SRGG), 361-409 (GTEP…AHTP), and 421-491 (PQAA…LFGG). Residues 270–283 (PEPPPLIAPLPPEL) show a composition bias toward pro residues. 2 stretches are compositionally biased toward low complexity: residues 289–299 (SPSSSSSSSSS) and 313–322 (TSRGGSSRGG). 2 stretches are compositionally biased toward pro residues: residues 365-374 (SAPPAPPSPA) and 460-476 (PPIPSPPPSPPPSPAPL). The region spanning 537-615 (DFSPEWSYPE…LSASVLFEYR (79 aa)) is the IPT/TIG domain. 3 ANK repeats span residues 712-745 (MSLLHLAAAQGYARLIETLSQWRSVETGSLDLEQ), 757-787 (CTPLMWACALGHLEAAVLLFRWNRQALSIPD), and 791-821 (RLPLSVAHSRGHVRLARCLEELQRQEPSVEP). Disordered stretches follow at residues 817–874 (PSVE…ASEM) and 906–929 (PLSSLPALPPASDDGAAPEDADSP). Composition is skewed to low complexity over residues 826–846 (SPPSSSPDTGLSSVSSPSELS) and 906–917 (PLSSLPALPPAS). IQ domains follow at residues 1049-1078 (YEAARVIQTAFRKYKGRRLKEQQEVAAAVI) and 1102-1131 (TQAAILIQSKFRSYYEQKRFQQSRRAAVLI).

Belongs to the CAMTA family. As to quaternary structure, may interact with calmodulin. Detected in brain. Expressed at constant levels throughout the cell cycle in neuroblastoma cell lines.

Its subcellular location is the nucleus. In terms of biological role, transcription activator. May act as tumor suppressor. The chain is Calmodulin-binding transcription activator 2 (CAMTA2) from Homo sapiens (Human).